The chain runs to 310 residues: Cytochrome f (310 aa).

The N-terminal stretch at 1-27 is a signal peptide; sequence MRRILTFFLGSIIIGLSIIISPSSSFA. Residues Tyr-28, Cys-48, Cys-51, and His-52 each coordinate heme. The chain crosses the membrane as a helical span at residues 277–297; that stretch reads VIGLIAFFAGVALTQILLVLK.

Belongs to the cytochrome f family. As to quaternary structure, the 4 large subunits of the cytochrome b6-f complex are cytochrome b6, subunit IV (17 kDa polypeptide, PetD), cytochrome f and the Rieske protein, while the 4 small subunits are PetG, PetL, PetM and PetN. The complex functions as a dimer. Requires heme as cofactor.

It localises to the cellular thylakoid membrane. Component of the cytochrome b6-f complex, which mediates electron transfer between photosystem II (PSII) and photosystem I (PSI), cyclic electron flow around PSI, and state transitions. The chain is Cytochrome f from Prochlorococcus marinus (strain SARG / CCMP1375 / SS120).